Reading from the N-terminus, the 62-residue chain is Photosystem II reaction center protein Z (62 aa).

2 helical membrane passes run 8–28 (AVFALIATSSILLISVPVVFA) and 41–61 (FSGTSLWIGLVFLVGILNSLI).

The protein belongs to the PsbZ family. PSII is composed of 1 copy each of membrane proteins PsbA, PsbB, PsbC, PsbD, PsbE, PsbF, PsbH, PsbI, PsbJ, PsbK, PsbL, PsbM, PsbT, PsbY, PsbZ, Psb30/Ycf12, at least 3 peripheral proteins of the oxygen-evolving complex and a large number of cofactors. It forms dimeric complexes.

The protein resides in the plastid. It localises to the chloroplast thylakoid membrane. Functionally, may control the interaction of photosystem II (PSII) cores with the light-harvesting antenna, regulates electron flow through the 2 photosystem reaction centers. PSII is a light-driven water plastoquinone oxidoreductase, using light energy to abstract electrons from H(2)O, generating a proton gradient subsequently used for ATP formation. This is Photosystem II reaction center protein Z from Jasminum nudiflorum (Winter jasmine).